Here is a 101-residue protein sequence, read N- to C-terminus: UPF0235 protein MmarC7_0309 (101 aa).

This sequence belongs to the UPF0235 family.

The protein is UPF0235 protein MmarC7_0309 of Methanococcus maripaludis (strain C7 / ATCC BAA-1331).